The primary structure comprises 701 residues: Epithelial splicing regulatory protein 2 (701 aa).

3 RRM domains span residues 226 to 303 (TVIR…KATG), 327 to 407 (VIIR…RSTA), and 448 to 523 (CVRL…VEVF).

The protein belongs to the ESRP family.

It localises to the nucleus. MRNA splicing factor that regulates the formation of epithelial cell-specific isoforms. Specifically regulates the expression of FGFR2-IIIb, an epithelial cell-specific isoform of FGFR2. Acts by directly binding specific sequences in mRNAs. Binds the GU-rich sequence motifs in the ISE/ISS-3, a cis-element regulatory region present in the mRNA of FGFR2. The chain is Epithelial splicing regulatory protein 2 (ESRP2) from Gallus gallus (Chicken).